We begin with the raw amino-acid sequence, 102 residues long: Urease subunit beta (102 aa).

It belongs to the urease beta subunit family. As to quaternary structure, heterotrimer of UreA (gamma), UreB (beta) and UreC (alpha) subunits. Three heterotrimers associate to form the active enzyme.

It is found in the cytoplasm. It catalyses the reaction urea + 2 H2O + H(+) = hydrogencarbonate + 2 NH4(+). It functions in the pathway nitrogen metabolism; urea degradation; CO(2) and NH(3) from urea (urease route): step 1/1. This chain is Urease subunit beta, found in Bordetella pertussis (strain Tohama I / ATCC BAA-589 / NCTC 13251).